Reading from the N-terminus, the 80-residue chain is Large ribosomal subunit protein bL31B (80 aa).

This sequence belongs to the bacterial ribosomal protein bL31 family. Type B subfamily. In terms of assembly, part of the 50S ribosomal subunit.

The chain is Large ribosomal subunit protein bL31B from Oenococcus oeni (strain ATCC BAA-331 / PSU-1).